The primary structure comprises 435 residues: Monodictyphenone cluster transcription factor (435 aa).

A DNA-binding region (zn(2)-C6 fungal-type) is located at residues 23–50; the sequence is CHACALSKLKCSQDKPTCSRCVKRGTAC. The disordered stretch occupies residues 117–147; it reads QYHQRTPSYPESIPSLLSSTGPGTSATSPLT. A compositionally biased stretch (low complexity) spans 130 to 147; it reads PSLLSSTGPGTSATSPLT.

It localises to the nucleus. In terms of biological role, transcription factor that regulates the expression of the gene cluster that mediates the biosynthesis of monodictyphenone, a prenyl xanthone derivative. The polypeptide is Monodictyphenone cluster transcription factor (Emericella nidulans (strain FGSC A4 / ATCC 38163 / CBS 112.46 / NRRL 194 / M139) (Aspergillus nidulans)).